A 268-amino-acid polypeptide reads, in one-letter code: Glucosamine-6-phosphate deaminase (268 aa).

The Proton acceptor; for enolization step role is filled by D72. D141 (for ring-opening step) is an active-site residue. The active-site Proton acceptor; for ring-opening step is H143. E148 acts as the For ring-opening step in catalysis.

It belongs to the glucosamine/galactosamine-6-phosphate isomerase family. NagB subfamily. In terms of assembly, homohexamer.

It catalyses the reaction alpha-D-glucosamine 6-phosphate + H2O = beta-D-fructose 6-phosphate + NH4(+). The protein operates within amino-sugar metabolism; N-acetylneuraminate degradation; D-fructose 6-phosphate from N-acetylneuraminate: step 5/5. Allosterically activated by N-acetylglucosamine 6-phosphate (GlcNAc6P). In terms of biological role, catalyzes the reversible isomerization-deamination of glucosamine 6-phosphate (GlcN6P) to form fructose 6-phosphate (Fru6P) and ammonium ion. The polypeptide is Glucosamine-6-phosphate deaminase (Proteus mirabilis (strain HI4320)).